The following is a 1597-amino-acid chain: THO complex subunit 2 (1597 aa).

Disordered regions lie at residues lysine 1250–arginine 1274 and glutamate 1384–arginine 1597. The segment covering glycine 1419–arginine 1430 has biased composition (polar residues). Basic and acidic residues-rich tracts occupy residues threonine 1458–lysine 1490, phenylalanine 1500–serine 1512, tyrosine 1522–arginine 1545, and arginine 1554–glutamate 1567. Positions asparagine 1568–leucine 1582 are enriched in polar residues.

It belongs to the THOC2 family. In terms of assembly, component of the THO complex, which is composed of HPR1, MFT1, THO2 and THP2. Together with SUB2, TEX1 and YRA1, THO forms the transcription/export (TREX) complex. THO associates with DNA and RNA in vitro.

The protein localises to the nucleus. Its function is as follows. Component the THO subcomplex of the TREX complex, which operates in coupling transcription elongation to mRNA export. The THO complex is recruited to transcribed genes and moves along the gene with the elongating polymerase during transcription. THO is important for stabilizing nascent RNA in the RNA polymerase II elongation complex by preventing formation of DNA:RNA hybrids behind the elongating polymerase. It functions in cotranscriptional formation of an export-competent messenger ribonucleoprotein particle (mRNP) by facilitating the loading of ATP-dependent RNA helicase SUB2 and the mRNA export factor YRA1 along the nascent mRNA. The chain is THO complex subunit 2 (THO2) from Saccharomyces cerevisiae (strain ATCC 204508 / S288c) (Baker's yeast).